Reading from the N-terminus, the 296-residue chain is Acetylglutamate kinase (296 aa).

Residues 68 to 69 (GG), Arg90, and Asn195 contribute to the substrate site.

It belongs to the acetylglutamate kinase family. ArgB subfamily.

The protein resides in the cytoplasm. It carries out the reaction N-acetyl-L-glutamate + ATP = N-acetyl-L-glutamyl 5-phosphate + ADP. It functions in the pathway amino-acid biosynthesis; L-arginine biosynthesis; N(2)-acetyl-L-ornithine from L-glutamate: step 2/4. Its function is as follows. Catalyzes the ATP-dependent phosphorylation of N-acetyl-L-glutamate. The polypeptide is Acetylglutamate kinase (Desulfotalea psychrophila (strain LSv54 / DSM 12343)).